The primary structure comprises 404 residues: Argininosuccinate synthase (404 aa).

Residues 10-18 and Ala38 contribute to the ATP site; that span reads AYSGGVDTS. Tyr89 serves as a coordination point for L-citrulline. Gly119 is a binding site for ATP. Positions 121, 125, and 126 each coordinate L-aspartate. Residue Asn125 coordinates L-citrulline. Residues Arg129, Ser177, Ser186, Glu262, and Tyr274 each contribute to the L-citrulline site.

Belongs to the argininosuccinate synthase family. Type 1 subfamily. As to quaternary structure, homotetramer.

It is found in the cytoplasm. It carries out the reaction L-citrulline + L-aspartate + ATP = 2-(N(omega)-L-arginino)succinate + AMP + diphosphate + H(+). It participates in amino-acid biosynthesis; L-arginine biosynthesis; L-arginine from L-ornithine and carbamoyl phosphate: step 2/3. In Prochlorococcus marinus (strain MIT 9515), this protein is Argininosuccinate synthase.